A 462-amino-acid polypeptide reads, in one-letter code: Chitinase 1 (462 aa).

The first 17 residues, 1–17, serve as a signal peptide directing secretion; the sequence is MILNLIILLAISIVASA. One can recognise a GH18 domain in the interval 18–291; that stretch reads SNIAAYWGQN…NQLHQALSGS (274 aa). Asparagine 57 carries an N-linked (GlcNAc...) asparagine glycan. The active-site Proton donor is glutamate 147.

It belongs to the glycosyl hydrolase 18 family. Chitinase class V subfamily.

The protein localises to the secreted. The enzyme catalyses Random endo-hydrolysis of N-acetyl-beta-D-glucosaminide (1-&gt;4)-beta-linkages in chitin and chitodextrins.. Its function is as follows. Chitinase involved in the remodeling of chitin in the fungal cell wall. Plays a role in cell separation. This chain is Chitinase 1 (CHT1), found in Candida albicans (strain SC5314 / ATCC MYA-2876) (Yeast).